The following is a 217-amino-acid chain: Thymidylate kinase (217 aa).

Position 16 to 23 (16 to 23 (GIDGAGKT)) interacts with ATP.

Belongs to the thymidylate kinase family.

The enzyme catalyses dTMP + ATP = dTDP + ADP. Its function is as follows. Phosphorylation of dTMP to form dTDP in both de novo and salvage pathways of dTTP synthesis. This is Thymidylate kinase from Xylella fastidiosa (strain M12).